A 644-amino-acid chain; its full sequence is 1-deoxy-D-xylulose-5-phosphate synthase (644 aa).

Residues His72 and 113–115 (GHA) contribute to the thiamine diphosphate site. Asp144 contacts Mg(2+). Thiamine diphosphate-binding positions include 145 to 146 (GA), Asn174, Tyr287, and Glu370. Position 174 (Asn174) interacts with Mg(2+).

This sequence belongs to the transketolase family. DXPS subfamily. Homodimer. Mg(2+) is required as a cofactor. Thiamine diphosphate serves as cofactor.

The enzyme catalyses D-glyceraldehyde 3-phosphate + pyruvate + H(+) = 1-deoxy-D-xylulose 5-phosphate + CO2. It functions in the pathway metabolic intermediate biosynthesis; 1-deoxy-D-xylulose 5-phosphate biosynthesis; 1-deoxy-D-xylulose 5-phosphate from D-glyceraldehyde 3-phosphate and pyruvate: step 1/1. In terms of biological role, catalyzes the acyloin condensation reaction between C atoms 2 and 3 of pyruvate and glyceraldehyde 3-phosphate to yield 1-deoxy-D-xylulose-5-phosphate (DXP). In Prochlorococcus marinus (strain MIT 9313), this protein is 1-deoxy-D-xylulose-5-phosphate synthase.